Consider the following 201-residue polypeptide: Small ribosomal subunit protein uS4c (201 aa).

Residues M89 to P157 enclose the S4 RNA-binding domain.

Belongs to the universal ribosomal protein uS4 family. In terms of assembly, part of the 30S ribosomal subunit. Contacts protein S5. The interaction surface between S4 and S5 is involved in control of translational fidelity.

The protein resides in the plastid. The protein localises to the chloroplast. Functionally, one of the primary rRNA binding proteins, it binds directly to 16S rRNA where it nucleates assembly of the body of the 30S subunit. Its function is as follows. With S5 and S12 plays an important role in translational accuracy. In Triticum aestivum (Wheat), this protein is Small ribosomal subunit protein uS4c (rps4).